A 142-amino-acid chain; its full sequence is Hemoglobin subunit beta-1 (142 aa).

Residues serine 2–histidine 142 form the Globin domain. The heme b site is built by histidine 59 and histidine 88.

This sequence belongs to the globin family. Heterotetramer of two alpha chains and two beta chains. As to expression, red blood cells.

Functionally, involved in oxygen transport from the lung to the various peripheral tissues. This Torpedo marmorata (Marbled electric ray) protein is Hemoglobin subunit beta-1 (HBB1).